A 504-amino-acid polypeptide reads, in one-letter code: Maturase K (504 aa).

This sequence belongs to the intron maturase 2 family. MatK subfamily.

It localises to the plastid. It is found in the chloroplast. In terms of biological role, usually encoded in the trnK tRNA gene intron. Probably assists in splicing its own and other chloroplast group II introns. This chain is Maturase K, found in Quercus coccifera (Kermes oak).